Consider the following 162-residue polypeptide: UPF0303 protein Arad_3071 (162 aa).

It belongs to the UPF0303 family.

This chain is UPF0303 protein Arad_3071, found in Rhizobium rhizogenes (strain K84 / ATCC BAA-868) (Agrobacterium radiobacter).